Here is a 162-residue protein sequence, read N- to C-terminus: MISEEKEYRPCVGIMLFNKQGNIFIGKRFDSDSYWQMPQGGVDEGEELEQAALRELLEEVGTDEAEVVAQNKEWIYYNLPEEVIPICWNGRYSGQKQRWFLMKFCGKDKDININYTDHPEFKEWRWQNVDDLVASAIPFKKEVYKKVIEEFSSIIKGSIYDS.

Positions 7-149 (EYRPCVGIML…KKEVYKKVIE (143 aa)) constitute a Nudix hydrolase domain. Positions 40 to 61 (GGVDEGEELEQAALRELLEEVG) match the Nudix box motif.

Belongs to the Nudix hydrolase family. RppH subfamily. It depends on a divalent metal cation as a cofactor.

Its function is as follows. Accelerates the degradation of transcripts by removing pyrophosphate from the 5'-end of triphosphorylated RNA, leading to a more labile monophosphorylated state that can stimulate subsequent ribonuclease cleavage. This is RNA pyrophosphohydrolase from Wolbachia pipientis subsp. Culex pipiens (strain wPip).